Reading from the N-terminus, the 276-residue chain is Putative pyruvate, phosphate dikinase regulatory protein 2 (276 aa).

146–153 provides a ligand contact to ADP; it reads GVSRTSKT.

The protein belongs to the pyruvate, phosphate/water dikinase regulatory protein family. PDRP subfamily.

The catalysed reaction is N(tele)-phospho-L-histidyl/L-threonyl-[pyruvate, phosphate dikinase] + ADP = N(tele)-phospho-L-histidyl/O-phospho-L-threonyl-[pyruvate, phosphate dikinase] + AMP + H(+). It catalyses the reaction N(tele)-phospho-L-histidyl/O-phospho-L-threonyl-[pyruvate, phosphate dikinase] + phosphate + H(+) = N(tele)-phospho-L-histidyl/L-threonyl-[pyruvate, phosphate dikinase] + diphosphate. Bifunctional serine/threonine kinase and phosphorylase involved in the regulation of the pyruvate, phosphate dikinase (PPDK) by catalyzing its phosphorylation/dephosphorylation. This chain is Putative pyruvate, phosphate dikinase regulatory protein 2, found in Enterococcus faecalis (strain ATCC 700802 / V583).